A 140-amino-acid chain; its full sequence is Hexon-interlacing protein (140 aa).

The stretch at 100 to 127 (LTALLAQLDSLTRELNVVSQQLLDLRQQ) forms a coiled coil. Serine 135 is subject to Phosphoserine; by host.

This sequence belongs to the adenoviridae hexon-interlacing protein family. In terms of assembly, homotrimer. Interacts with hexon protein; this interaction tethers the hexons together. Self-interacts with adjacent proteins. Interacts with kinesin light chain KLC1; this interaction leads to capsid disruption at the nuclear pore complex during virus entry into host cell.

It localises to the virion. Its subcellular location is the host nucleus. Structural component of the virion that forms triskelion structures consisting of three molecules that stabilize three hexon trimers at the center of each icosahedral facet and fixes the peripentonal hexons. Dispensable for assembly. During virus entry, recruits the anterograde motor kinesin-1 to the capsid docked at the nuclear pore complex thereby subjecting the docked capsid to a pulling force. The resulting tension leads to capsid disruption, dispersion of capsid fragments toward cell periphery and eventually viral DNA entry into the host nucleus. The polypeptide is Hexon-interlacing protein (Human adenovirus C serotype 2 (HAdV-2)).